A 571-amino-acid polypeptide reads, in one-letter code: Putative diflavin flavoprotein A 1 (571 aa).

The zinc metallo-hydrolase stretch occupies residues 43 to 236 (ENGTTYNSFL…PPVQLVATGH (194 aa)). Residues His-92, Glu-94, Asp-96, His-159, Asp-178, and His-236 each contribute to the Fe cation site. One can recognise a Flavodoxin-like domain in the interval 265 to 426 (VAIFYAANYG…DLDKALGRLS (162 aa)). Residues 427-571 (GGLYIITAQK…VHHRKVGNHY (145 aa)) are flavodoxin-reductase-like.

It in the N-terminal section; belongs to the zinc metallo-hydrolase group 3 family. The protein in the C-terminal section; belongs to the flavodoxin reductase family. Fe cation serves as cofactor.

Mediates electron transfer from NADH to oxygen, reducing it to water. This modular protein has 3 redox cofactors, in other organisms the same activity requires 2 or 3 proteins. The protein is Putative diflavin flavoprotein A 1 (dfa1) of Thermosynechococcus vestitus (strain NIES-2133 / IAM M-273 / BP-1).